A 517-amino-acid polypeptide reads, in one-letter code: Ovoinhibitor (517 aa).

7 Kazal-like domains span residues 67–132, 133–197, 198–263, 264–329, 330–394, 395–460, and 461–517; these read FGIE…ECRP, KHVT…ECKL, EIGS…KCRQ, EIPE…RCKE, RSTP…RCRE, EVPE…RCEE, and DITK…MAAC. An N-linked (GlcNAc...) asparagine glycan is attached at asparagine 72. Intrachain disulfides connect cysteine 73-cysteine 112, cysteine 90-cysteine 109, cysteine 98-cysteine 130, cysteine 139-cysteine 177, cysteine 155-cysteine 174, cysteine 163-cysteine 195, cysteine 204-cysteine 243, cysteine 221-cysteine 240, cysteine 229-cysteine 261, cysteine 270-cysteine 309, cysteine 287-cysteine 306, cysteine 295-cysteine 327, cysteine 336-cysteine 374, cysteine 352-cysteine 371, cysteine 360-cysteine 392, cysteine 401-cysteine 440, cysteine 418-cysteine 437, cysteine 426-cysteine 458, cysteine 467-cysteine 499, cysteine 477-cysteine 496, and cysteine 485-cysteine 517. Asparagine 186 carries an N-linked (GlcNAc...) asparagine glycan. Residue asparagine 506 is glycosylated (N-linked (GlcNAc...) asparagine).

Post-translationally, glycosylated. In terms of tissue distribution, expressed in oviduct (at protein level). Expressed in egg white (at protein level). Expressed in egg yolk plasma of non-fertilized eggs (at protein level). Expressed in the magnum of the oviduct (at protein level). Expressed in oviduct. Expressed in liver. Expressed in the cortico-medullary border region of the bursa of Fabricius by the bursal secretory dendritic-like cells. Highly expressed in the magnum of the oviduct, and at a lower level in uterus. Weakly expressed in white isthmus and very weakly in infundibulum. Not expressed in duodenum and kidney.

It localises to the secreted. Functionally, serine protease inhibitor involved in antimicrobial egg defense preventing contamination of table eggs (non-fertilized eggs) and protecting the chick embryo (fertilized eggs). Inhibits trypsin, chymotrypsin, elastase, subtilisin and a proteinase of fungus Aspergillus oryzae. Inhibits calcium-activated potassium channels KCNMA1 (bovine) and slo (Drosophila). Has antibacterial activity against B.thuringiensis LMSA 3.06.004, but not against S.aureus CIP 103 811, P.aeruginosa PAO1, B.cereus ATCC6464 or B.subtilis ATCC 6633. The polypeptide is Ovoinhibitor (Gallus gallus (Chicken)).